The sequence spans 328 residues: Malate dehydrogenase (328 aa).

12 to 18 is a binding site for NAD(+); that stretch reads GAAGQIA. Substrate is bound by residues arginine 93 and arginine 99. NAD(+)-binding positions include asparagine 106, glutamine 113, and 130-132; that span reads VGN. Substrate is bound by residues asparagine 132 and arginine 163. Catalysis depends on histidine 188, which acts as the Proton acceptor.

It belongs to the LDH/MDH superfamily. MDH type 2 family.

The enzyme catalyses (S)-malate + NAD(+) = oxaloacetate + NADH + H(+). In terms of biological role, catalyzes the reversible oxidation of malate to oxaloacetate. This is Malate dehydrogenase from Burkholderia ambifaria (strain ATCC BAA-244 / DSM 16087 / CCUG 44356 / LMG 19182 / AMMD) (Burkholderia cepacia (strain AMMD)).